Reading from the N-terminus, the 1298-residue chain is Ras guanine nucleotide exchange factor Q (1298 aa).

5 disordered regions span residues 1–26 (MDIN…INNF), 46–88 (NNNI…SIEG), 211–271 (NISN…GPLK), 314–384 (YTPP…QQQQ), and 459–533 (LSNG…STTT). Low complexity-rich tracts occupy residues 211–245 (NISN…NSNN) and 315–384 (TPPS…QQQQ). Residues 352–389 (SSLNANNNTNNNNQQLQQQQQQQQQQQLQQQQQLTKSY) are a coiled coil. Positions 473–482 (LHLSTESTTS) are enriched in polar residues. Low complexity-rich tracts occupy residues 483 to 501 (NNNN…NNNN) and 508 to 533 (TTNS…STTT). An N-terminal Ras-GEF domain is found at 550 to 689 (DKDEVIAGER…YLKKAINDSG (140 aa)). Residues 723–801 (MSQSLQLKER…SSSSTTTTTT (79 aa)) enclose the DEP domain. Disordered stretches follow at residues 781–864 (SKSG…PNSI) and 884–920 (GIAN…SNSF). Positions 783 to 864 (SGSSFSPSSS…ITSTSLPNSI (82 aa)) are enriched in low complexity. In terms of domain architecture, Ras-GEF spans 964–1193 (HPVEIARQLT…YKASHMIEQP (230 aa)). Residues 1214-1267 (TTTTTNNLNNNNNNNNPNNNNNNNNNSANNKSSPSPSPSSSPITSSPISSLTIN) are disordered.

In terms of biological role, promotes the exchange of Ras-bound GDP by GTP. Seems to play a role in chemotaxis. The polypeptide is Ras guanine nucleotide exchange factor Q (gefQ) (Dictyostelium discoideum (Social amoeba)).